We begin with the raw amino-acid sequence, 377 residues long: Outer membrane porin N (377 aa).

The signal sequence occupies residues 1 to 21 (MKSKVLALLIPALLAAGAAHA). Residues 175–189 (NNEGASNGQEGTNNG) show a composition bias toward polar residues. The disordered stretch occupies residues 175–196 (NNEGASNGQEGTNNGRDVRHEN).

Belongs to the Gram-negative porin family. As to quaternary structure, homotrimer.

It localises to the cell outer membrane. Forms pores that allow passive diffusion of small molecules across the outer membrane. Non-specific porin. The protein is Outer membrane porin N (ompN) of Escherichia coli (strain K12).